Consider the following 84-residue polypeptide: RNA-binding protein Hfq (84 aa).

A Sm domain is found at 10-70 (DNVLNQVRKN…VSTIIPGKTL (61 aa)).

It belongs to the Hfq family. In terms of assembly, homohexamer.

Its function is as follows. RNA chaperone that binds small regulatory RNA (sRNAs) and mRNAs to facilitate mRNA translational regulation in response to envelope stress, environmental stress and changes in metabolite concentrations. Also binds with high specificity to tRNAs. In Natranaerobius thermophilus (strain ATCC BAA-1301 / DSM 18059 / JW/NM-WN-LF), this protein is RNA-binding protein Hfq.